A 938-amino-acid chain; its full sequence is Isoleucine--tRNA ligase (938 aa).

The 'HIGH' region motif lies at 58-68; the sequence is PYANGSIHIGH. An N6-acetyllysine modification is found at K183. E561 serves as a coordination point for L-isoleucyl-5'-AMP. A 'KMSKS' region motif is present at residues 602–606; sequence KMSKS. K605 is an ATP binding site. 4 residues coordinate Zn(2+): C901, C904, C921, and C924.

This sequence belongs to the class-I aminoacyl-tRNA synthetase family. IleS type 1 subfamily. In terms of assembly, monomer. Zn(2+) is required as a cofactor.

It is found in the cytoplasm. The enzyme catalyses tRNA(Ile) + L-isoleucine + ATP = L-isoleucyl-tRNA(Ile) + AMP + diphosphate. Catalyzes the attachment of isoleucine to tRNA(Ile). As IleRS can inadvertently accommodate and process structurally similar amino acids such as valine, to avoid such errors it has two additional distinct tRNA(Ile)-dependent editing activities. One activity is designated as 'pretransfer' editing and involves the hydrolysis of activated Val-AMP. The other activity is designated 'posttransfer' editing and involves deacylation of mischarged Val-tRNA(Ile). This is Isoleucine--tRNA ligase from Escherichia coli O6:K15:H31 (strain 536 / UPEC).